We begin with the raw amino-acid sequence, 345 residues long: Phosphoribosylformylglycinamidine cyclo-ligase (345 aa).

This sequence belongs to the AIR synthase family.

It is found in the cytoplasm. The catalysed reaction is 2-formamido-N(1)-(5-O-phospho-beta-D-ribosyl)acetamidine + ATP = 5-amino-1-(5-phospho-beta-D-ribosyl)imidazole + ADP + phosphate + H(+). The protein operates within purine metabolism; IMP biosynthesis via de novo pathway; 5-amino-1-(5-phospho-D-ribosyl)imidazole from N(2)-formyl-N(1)-(5-phospho-D-ribosyl)glycinamide: step 2/2. The polypeptide is Phosphoribosylformylglycinamidine cyclo-ligase (Shewanella woodyi (strain ATCC 51908 / MS32)).